A 258-amino-acid chain; its full sequence is Acyl-[acyl-carrier-protein]--UDP-N-acetylglucosamine O-acyltransferase (258 aa).

This sequence belongs to the transferase hexapeptide repeat family. LpxA subfamily. In terms of assembly, homotrimer.

The protein resides in the cytoplasm. The enzyme catalyses a (3R)-hydroxyacyl-[ACP] + UDP-N-acetyl-alpha-D-glucosamine = a UDP-3-O-[(3R)-3-hydroxyacyl]-N-acetyl-alpha-D-glucosamine + holo-[ACP]. It functions in the pathway glycolipid biosynthesis; lipid IV(A) biosynthesis; lipid IV(A) from (3R)-3-hydroxytetradecanoyl-[acyl-carrier-protein] and UDP-N-acetyl-alpha-D-glucosamine: step 1/6. In terms of biological role, involved in the biosynthesis of lipid A, a phosphorylated glycolipid that anchors the lipopolysaccharide to the outer membrane of the cell. The chain is Acyl-[acyl-carrier-protein]--UDP-N-acetylglucosamine O-acyltransferase from Pseudomonas putida (strain GB-1).